We begin with the raw amino-acid sequence, 94 residues long: Small ribosomal subunit protein uS19 (94 aa).

It belongs to the universal ribosomal protein uS19 family.

Functionally, protein S19 forms a complex with S13 that binds strongly to the 16S ribosomal RNA. The protein is Small ribosomal subunit protein uS19 of Natranaerobius thermophilus (strain ATCC BAA-1301 / DSM 18059 / JW/NM-WN-LF).